The primary structure comprises 363 residues: Cobalt-precorrin-5B C(1)-methyltransferase (363 aa).

The protein belongs to the CbiD family.

The enzyme catalyses Co-precorrin-5B + S-adenosyl-L-methionine = Co-precorrin-6A + S-adenosyl-L-homocysteine. The protein operates within cofactor biosynthesis; adenosylcobalamin biosynthesis; cob(II)yrinate a,c-diamide from sirohydrochlorin (anaerobic route): step 6/10. Its function is as follows. Catalyzes the methylation of C-1 in cobalt-precorrin-5B to form cobalt-precorrin-6A. The chain is Cobalt-precorrin-5B C(1)-methyltransferase from Burkholderia pseudomallei (strain K96243).